The chain runs to 277 residues: Hemin import ATP-binding protein HmuV (277 aa).

Positions 19 to 259 (VEVADLNYSV…AIIEEAFGHR (241 aa)) constitute an ABC transporter domain. 51-58 (GRNGAGKS) is a binding site for ATP.

This sequence belongs to the ABC transporter superfamily. Heme (hemin) importer (TC 3.A.1.14.5) family. As to quaternary structure, the complex is composed of two ATP-binding proteins (HmuV), two transmembrane proteins (HmuU) and a solute-binding protein (HmuT).

It is found in the cell membrane. In terms of biological role, part of the ABC transporter complex HmuTUV involved in hemin import. Responsible for energy coupling to the transport system. The sequence is that of Hemin import ATP-binding protein HmuV from Deinococcus geothermalis (strain DSM 11300 / CIP 105573 / AG-3a).